The sequence spans 223 residues: Translation initiation factor 6 (223 aa).

This sequence belongs to the eIF-6 family.

In terms of biological role, binds to the 50S ribosomal subunit and prevents its association with the 30S ribosomal subunit to form the 70S initiation complex. The protein is Translation initiation factor 6 of Sulfolobus acidocaldarius (strain ATCC 33909 / DSM 639 / JCM 8929 / NBRC 15157 / NCIMB 11770).